We begin with the raw amino-acid sequence, 780 residues long: uncharacterized protein (780 aa).

The 71-residue stretch at 10–80 (NNNIIKLNIG…MRTGTFTLPY (71 aa)) folds into the BTB domain.

This is an uncharacterized protein from Dictyostelium discoideum (Social amoeba).